Consider the following 93-residue polypeptide: Auxin-responsive protein SAUR26 (93 aa).

It belongs to the ARG7 family. In terms of assembly, interacts with PP2C-D1. In terms of tissue distribution, higher expression in thermo-responsive cultivars (e.g. cv. Alst-1, cv. Ang-0 and cv. Com-0) than in low thermo-responsive cultivars (e.g. cv. Dja-1, cv. El-0 and cv. Kon).

The protein resides in the cell membrane. In terms of biological role, provide a mechanistic link between auxin and plasma membrane H(+)-ATPases (PM H(+)-ATPases, e.g. AHA1 and AHA2), and triggers PM H(+)-ATPases activity by promoting phosphorylation of their C-terminal autoinhibitory domain as a result of PP2C-D subfamily of type 2C phosphatases inhibition, thus leading to the acidification of the apoplast and the facilitation of solutes and water uptake to drive cell expansion. Functions as a positive effectors of cell expansion through modulation of auxin transport. Involved in thermo-responsiveness of plant architecture. Enhances plasma membrane H(+)-ATPase. Probably involved in light intensity mediated root development. The chain is Auxin-responsive protein SAUR26 from Arabidopsis thaliana (Mouse-ear cress).